Consider the following 92-residue polypeptide: Small ribosomal subunit protein bS18 (92 aa).

The tract at residues 1–28 (MTQQGNSGERKPRGKGPKRPRKPKVDPF) is disordered. Over residues 12–22 (PRGKGPKRPRK) the composition is skewed to basic residues.

Belongs to the bacterial ribosomal protein bS18 family. In terms of assembly, part of the 30S ribosomal subunit. Forms a tight heterodimer with protein bS6.

Binds as a heterodimer with protein bS6 to the central domain of the 16S rRNA, where it helps stabilize the platform of the 30S subunit. The protein is Small ribosomal subunit protein bS18 of Deinococcus radiodurans (strain ATCC 13939 / DSM 20539 / JCM 16871 / CCUG 27074 / LMG 4051 / NBRC 15346 / NCIMB 9279 / VKM B-1422 / R1).